Consider the following 445-residue polypeptide: MKQRQFFGTDGIRGKVGAGKMTPELALKLGWAAGRVLSRSGTQKVIIGKDTRISGYLFESALEAGLSAAGLDVMLIGPMPTPAVAYLTRTFRAEAGIVISASHNPYYDNGIKFFANDGSKLDDEVELEIEAELDKPLTCVESHELGKVVRIDDAAGRYIEYCKGHFPAEQTLSGLKIVVDCAHGATYHIAPSVFKELGAEVIAIGDKPNGLNINDKVGATSMGQICETVLAENADLGIALDGDGDRIMMVNRHGRVIDGDEILYILACDAQKRGVLRGGVVGTLMSNLGLDLALQALDIPFVRSKVGDRYVMELLKEHDWRIGGENSGHILNLDHGTTGDGIVAGILVLAAMQRQNATLEELTADIKMLPQVLVNVRFEGDNDPLVSEIVLAAKAEVEQKLGARGRVLLRKSGTEPLLRVMVEGDEQEAVTEYAHYIADAVRNLV.

Ser-102 serves as the catalytic Phosphoserine intermediate. Residues Ser-102, Asp-241, Asp-243, and Asp-245 each coordinate Mg(2+). Phosphoserine is present on Ser-102.

Belongs to the phosphohexose mutase family. Requires Mg(2+) as cofactor. Post-translationally, activated by phosphorylation.

It catalyses the reaction alpha-D-glucosamine 1-phosphate = D-glucosamine 6-phosphate. Functionally, catalyzes the conversion of glucosamine-6-phosphate to glucosamine-1-phosphate. The chain is Phosphoglucosamine mutase from Shewanella halifaxensis (strain HAW-EB4).